A 260-amino-acid chain; its full sequence is Imidazole glycerol phosphate synthase subunit HisF (260 aa).

Catalysis depends on residues Asp11 and Asp130.

Belongs to the HisA/HisF family. In terms of assembly, heterodimer of HisH and HisF.

It localises to the cytoplasm. It catalyses the reaction 5-[(5-phospho-1-deoxy-D-ribulos-1-ylimino)methylamino]-1-(5-phospho-beta-D-ribosyl)imidazole-4-carboxamide + L-glutamine = D-erythro-1-(imidazol-4-yl)glycerol 3-phosphate + 5-amino-1-(5-phospho-beta-D-ribosyl)imidazole-4-carboxamide + L-glutamate + H(+). The protein operates within amino-acid biosynthesis; L-histidine biosynthesis; L-histidine from 5-phospho-alpha-D-ribose 1-diphosphate: step 5/9. IGPS catalyzes the conversion of PRFAR and glutamine to IGP, AICAR and glutamate. The HisF subunit catalyzes the cyclization activity that produces IGP and AICAR from PRFAR using the ammonia provided by the HisH subunit. This Desulfatibacillum aliphaticivorans protein is Imidazole glycerol phosphate synthase subunit HisF.